The sequence spans 613 residues: RUN domain-containing protein 1 (613 aa).

Residues 15 to 36 (AAVGPKAKDEEEEEEEPLPPCE) form a disordered region. Position 54 is a phosphothreonine (T54). The span at 57–69 (LEEATAEEPGAAP) shows a compositional bias: low complexity. 3 disordered regions span residues 57 to 79 (LEEA…PGRT), 140 to 177 (YEGP…RLET), and 305 to 330 (GKTG…KAED). A phosphoserine mark is found at S71 and S75. Basic and acidic residues predominate over residues 159 to 177 (PWLRGEDQSEQEKQERLET). Residues 160–235 (WLRGEDQSEQ…IKKLDMNLNE (76 aa)) adopt a coiled-coil conformation. Over residues 309–325 (NGCSRTGSSRTPPGNSK) the composition is skewed to polar residues. Residues 421–602 (ELTMAVRKEL…LKFSLPVDLA (182 aa)) enclose the RUN domain. S497 carries the phosphoserine modification.

Functionally, may play a role as p53/TP53 inhibitor and thus may have oncogenic activity. This chain is RUN domain-containing protein 1 (RUNDC1), found in Homo sapiens (Human).